The primary structure comprises 294 residues: MKQLTLAKTVKGVGIGLHKGEPIEITLEPLEANSGIVFFRSDLNASYKASPENVINTQMATVLGDDRGFISTIEHLMSAINAYGIDNVRIVLNANEAPVMDGSSISFCMMLDEAEVKELDAPKKIMVIKKPVEVRDGNKFVRLTPTKEPRINYTIKFDNAVIGEQSYNFEFSKKNYIENIARARTFGFLKDVQALRSMNLALGGSLENTIVVDENRILNPEGLRFKDEFVRHKILDAIGDLTLLGYRVFGDYISYAGSHHLNHLLTKEVLKDKDAYEIVSLEKTTQKAYEKVFA.

Zn(2+)-binding residues include His75, His232, and Asp236. Catalysis depends on His259, which acts as the Proton donor.

The protein belongs to the LpxC family. It depends on Zn(2+) as a cofactor.

It carries out the reaction a UDP-3-O-[(3R)-3-hydroxyacyl]-N-acetyl-alpha-D-glucosamine + H2O = a UDP-3-O-[(3R)-3-hydroxyacyl]-alpha-D-glucosamine + acetate. Its pathway is glycolipid biosynthesis; lipid IV(A) biosynthesis; lipid IV(A) from (3R)-3-hydroxytetradecanoyl-[acyl-carrier-protein] and UDP-N-acetyl-alpha-D-glucosamine: step 2/6. Functionally, catalyzes the hydrolysis of UDP-3-O-myristoyl-N-acetylglucosamine to form UDP-3-O-myristoylglucosamine and acetate, the committed step in lipid A biosynthesis. The sequence is that of UDP-3-O-acyl-N-acetylglucosamine deacetylase from Campylobacter jejuni subsp. jejuni serotype O:23/36 (strain 81-176).